Consider the following 464-residue polypeptide: ATP synthase subunit beta (464 aa).

ATP is bound at residue 148 to 155 (GGAGVGKT).

It belongs to the ATPase alpha/beta chains family. As to quaternary structure, F-type ATPases have 2 components, CF(1) - the catalytic core - and CF(0) - the membrane proton channel. CF(1) has five subunits: alpha(3), beta(3), gamma(1), delta(1), epsilon(1). CF(0) has three main subunits: a(1), b(2) and c(9-12). The alpha and beta chains form an alternating ring which encloses part of the gamma chain. CF(1) is attached to CF(0) by a central stalk formed by the gamma and epsilon chains, while a peripheral stalk is formed by the delta and b chains.

It localises to the cell inner membrane. It carries out the reaction ATP + H2O + 4 H(+)(in) = ADP + phosphate + 5 H(+)(out). Produces ATP from ADP in the presence of a proton gradient across the membrane. The catalytic sites are hosted primarily by the beta subunits. The chain is ATP synthase subunit beta from Acinetobacter baumannii (strain AB0057).